We begin with the raw amino-acid sequence, 324 residues long: MKPSVILYKALPDDLLQRLQEHFTVHQVANLSPQTVEQNAAIFAEAEGLLGSNENVDAALLEKMPKLRATSTISVGYDNFDVDALTARKILLMHTPTVLTETVADTLMALVLSTARRVVEVAERVKAGEWTASIGPDWYGTDVHHKTLGIVGMGRIGMALAQRAHFGFNMPILYNARRHHKEAEERFNARYCDLDTLLQESDFVCLILPLTDETHHLFGAEQFAKMKSSAIFINAGRGPVVDENALIAALQKGEIHAAGLDVFEQEPLSVDSPLLSMANVVAVPHIGSATHETRYGMAACAVDNLIDALQGKVEKNCVNPHVAD.

Residues R237 and E266 contribute to the active site. Residue H285 is the Proton donor of the active site.

The protein belongs to the D-isomer specific 2-hydroxyacid dehydrogenase family. GhrB subfamily. In terms of assembly, homodimer.

It localises to the cytoplasm. It carries out the reaction glycolate + NADP(+) = glyoxylate + NADPH + H(+). The catalysed reaction is (R)-glycerate + NAD(+) = 3-hydroxypyruvate + NADH + H(+). It catalyses the reaction (R)-glycerate + NADP(+) = 3-hydroxypyruvate + NADPH + H(+). Catalyzes the NADPH-dependent reduction of glyoxylate and hydroxypyruvate into glycolate and glycerate, respectively. This Shigella boydii serotype 18 (strain CDC 3083-94 / BS512) protein is Glyoxylate/hydroxypyruvate reductase B.